The primary structure comprises 239 residues: Derlin-2 (239 aa).

The Cytoplasmic segment spans residues 1 to 56; that stretch reads MAYQSLRLEYLQIPPVSRAYTTACVLTTAAVQLELITPFQLYFNPELIFKHFQIWR. Residues 57 to 77 form a helical membrane-spanning segment; sequence LITNFLFFGPVGFNFLFNMIF. The Lumenal segment spans residues 78–98; that stretch reads LYRYCRMLEEGSFRGRTADFV. The chain crosses the membrane as a helical span at residues 99–119; that stretch reads FMFLFGGFLMTLFGLFVSLVF. Topologically, residues 120-150 are cytoplasmic; sequence LGQAFTIMLVYVWSRRNPYVRMNFFGLLNFQ. The chain crosses the membrane as a helical span at residues 151–171; it reads APFLPWVLMGFSLLLGNSIIV. D172 is a topological domain (lumenal). The chain crosses the membrane as a helical span at residues 173–193; that stretch reads LLGIAVGHIYFFLEDVFPNQP. Topologically, residues 194–239 are cytoplasmic; it reads GGIRILKTPSILKAIFDTPDEDPNYNPLPEERPGGFAWGEGQRLGG. The tract at residues 215-239 is disordered; it reads DPNYNPLPEERPGGFAWGEGQRLGG. Positions 229–239 are enriched in gly residues; sequence FAWGEGQRLGG.

It belongs to the derlin family. As to quaternary structure, forms homo- and heterooligomers with DERL3 and, to a lesser extent, with DERL1. Interacts with the SEL1L/SYVN1 and VCP/SELENOS protein complexes. Mediates association between VCP and EDEM1, as well as that between VCP and the misfolded glycoproteins. Interacts with OS9. Interacts with SELENOK and SELENOS. Interacts with the signal recognition particle/SRP and the SRP receptor; in the process of endoplasmic reticulum stress-induced pre-emptive quality control. Interacts with CCDC47.

The protein localises to the endoplasmic reticulum membrane. Its function is as follows. Functional component of endoplasmic reticulum-associated degradation (ERAD) for misfolded lumenal glycoproteins, but not that of misfolded nonglycoproteins. May act by forming a channel that allows the retrotranslocation of misfolded glycoproteins into the cytosol where they are ubiquitinated and degraded by the proteasome. May mediate the interaction between VCP and misfolded glycoproteins. May also be involved in endoplasmic reticulum stress-induced pre-emptive quality control, a mechanism that selectively attenuates the translocation of newly synthesized proteins into the endoplasmic reticulum and reroutes them to the cytosol for proteasomal degradation. This chain is Derlin-2, found in Pongo abelii (Sumatran orangutan).